The chain runs to 142 residues: uncharacterized protein (142 aa).

This is an uncharacterized protein from Homo sapiens (Human).